The sequence spans 668 residues: Lebercilin-like protein (668 aa).

Residues 17-44 (SVALENNRRSAECKRSPGTGDFSRNSSA) are disordered. The span at 22 to 31 (NNRRSAECKR) shows a compositional bias: basic and acidic residues. 2 coiled-coil regions span residues 148–259 (LHKI…EREE) and 305–336 (AAQT…IKNI). The disordered stretch occupies residues 351–402 (YPKVSSTKSVQADRKSLPFTSMRHQGTQKSDVPPLTTKGKKATGNMNHKEKS). Polar residues predominate over residues 368 to 380 (PFTSMRHQGTQKS). The stretch at 420 to 440 (EDSKTKYEDLSREEKHLEVQV) forms a coiled coil. Disordered regions lie at residues 495–520 (RSMQ…PLRQ), 533–581 (LHHG…FGKS), and 605–668 (SGYV…KIII). The span at 546-558 (AGNTKYSHSTSKH) shows a compositional bias: polar residues. Composition is skewed to basic and acidic residues over residues 560 to 572 (SNRE…HSDS) and 621 to 632 (GSEEPLQSKESH). Positions 633–660 (PPSQASASNAFGDSKVTVVNSIKPSSPT) are enriched in polar residues.

Belongs to the LCA5 family.

This is Lebercilin-like protein from Macaca fascicularis (Crab-eating macaque).